The primary structure comprises 640 residues: MRKVKIGELINSLVSEVEAIDASDRPQGDKTKKIKAAALKYKNALFNDKRKFRGKGLEKRISANTFNSYMSRARKRFDDRLHHNFEKNVIKLSEKYPLYSEELSSWLSMPAASIRQHMSRLQAKLKEIMPLAEDLSNIKIGTKNSEAKINKLANKYPEWQFAISDLNSEDWKDKRDYLYKLFQQGSSLLEDLNNLKVNHEVLYHLQLSSAERTSIQQRWANVLSEKKRNVVVIDYPRYMQAIYDIINKPIVSFDLTTRRGMAPLAFALAALSGRRMIEIMLQGEFSVAGKYTVTFLGQAKKRSEDKGISRKIYTLCDATLFVSLVNELRSCPAAADFDEVIKGYGENDTRSENGRINAILATAFNPWVKTFLGDDRRVYKDSRAIYARIAYEMFFRVDPRWKNVDEDVFFMEILGHDDENTQLHYKQFKLANFSRTWRPNVGEENARLAALQKLDSMMPDFARGDAGVRIHETVKQLVEQDPSIKITNSTLRPFNFSTRLIPRYLEFAADALGQFVGENGQWQLKDEAPAIVLPDEEILEPMDDVDLDDENHDDETLDDDEIEVDESEGEELEEAGDAEEAEVAEQEEKHPGKPNFKAPRDNGDGTYMVEFEFGGRHYAWSGAAGNRVEAMQSAWSAYFK.

Residues R275, K300, R383, and H416 each contribute to the DNA site. The Nucleophile role is filled by Y425. The segment covering 545–585 (VDLDDENHDDETLDDDEIEVDESEGEELEEAGDAEEAEVAE) has biased composition (acidic residues). A disordered region spans residues 545 to 605 (VDLDDENHDD…FKAPRDNGDG (61 aa)).

Belongs to the Caudoviricetes Protelomerase family. Monomer. Homodimer; in presence of DNA.

Its function is as follows. Converts the circular intermediates produced by the viral replication and carrying a joined telomere site to a linear DNA molecule with covalently closed hairpin ends. The viral circular DNA is cleaved at a palindromic site called telRL thereby generating a linear prophage plasmid with telomeres. Binds covalently to the 3'-phosphoryl of the cleaved strands. The protein is Protelomerase of Klebsiella oxytoca (Bacteriophage phiKO2).